Here is a 330-residue protein sequence, read N- to C-terminus: Ferredoxin--NADP reductase (330 aa).

Residues Glu-35, Gln-43, Tyr-48, Val-90, Phe-123, Asp-285, and Thr-326 each contribute to the FAD site.

Belongs to the ferredoxin--NADP reductase type 2 family. Homodimer. Requires FAD as cofactor.

It carries out the reaction 2 reduced [2Fe-2S]-[ferredoxin] + NADP(+) + H(+) = 2 oxidized [2Fe-2S]-[ferredoxin] + NADPH. This chain is Ferredoxin--NADP reductase, found in Streptococcus pyogenes serotype M3 (strain ATCC BAA-595 / MGAS315).